Consider the following 529-residue polypeptide: Glucose-6-phosphate isomerase (529 aa).

Residue Glu-322 is the Proton donor of the active site. Active-site residues include His-351 and Lys-455.

It belongs to the GPI family.

Its subcellular location is the cytoplasm. The enzyme catalyses alpha-D-glucose 6-phosphate = beta-D-fructose 6-phosphate. It functions in the pathway carbohydrate biosynthesis; gluconeogenesis. The protein operates within carbohydrate degradation; glycolysis; D-glyceraldehyde 3-phosphate and glycerone phosphate from D-glucose: step 2/4. Its function is as follows. Catalyzes the reversible isomerization of glucose-6-phosphate to fructose-6-phosphate. In Thermosynechococcus vestitus (strain NIES-2133 / IAM M-273 / BP-1), this protein is Glucose-6-phosphate isomerase.